We begin with the raw amino-acid sequence, 153 residues long: D-aminoacyl-tRNA deacylase (153 aa).

A Gly-cisPro motif, important for rejection of L-amino acids motif is present at residues 142–143; the sequence is GP.

The protein belongs to the DTD family. In terms of assembly, homodimer.

Its subcellular location is the cytoplasm. The catalysed reaction is glycyl-tRNA(Ala) + H2O = tRNA(Ala) + glycine + H(+). It catalyses the reaction a D-aminoacyl-tRNA + H2O = a tRNA + a D-alpha-amino acid + H(+). Functionally, an aminoacyl-tRNA editing enzyme that deacylates mischarged D-aminoacyl-tRNAs. Also deacylates mischarged glycyl-tRNA(Ala), protecting cells against glycine mischarging by AlaRS. Acts via tRNA-based rather than protein-based catalysis; rejects L-amino acids rather than detecting D-amino acids in the active site. By recycling D-aminoacyl-tRNA to D-amino acids and free tRNA molecules, this enzyme counteracts the toxicity associated with the formation of D-aminoacyl-tRNA entities in vivo and helps enforce protein L-homochirality. This chain is D-aminoacyl-tRNA deacylase, found in Acidovorax ebreus (strain TPSY) (Diaphorobacter sp. (strain TPSY)).